A 253-amino-acid polypeptide reads, in one-letter code: Sulfur carrier protein FdhD (253 aa).

The Cysteine persulfide intermediate role is filled by Cys-100.

This sequence belongs to the FdhD family.

Its subcellular location is the cytoplasm. In terms of biological role, required for formate dehydrogenase (FDH) activity. Acts as a sulfur carrier protein that transfers sulfur from IscS to the molybdenum cofactor prior to its insertion into FDH. This chain is Sulfur carrier protein FdhD, found in Sulfolobus acidocaldarius (strain ATCC 33909 / DSM 639 / JCM 8929 / NBRC 15157 / NCIMB 11770).